The sequence spans 762 residues: Probable disease resistance protein At1g61300 (762 aa).

G2 carries the N-myristoyl glycine lipid modification. 2 S-palmitoyl cysteine lipidation sites follow: C3 and C4. The 304-residue stretch at 26–329 folds into the NB-ARC domain; the sequence is NINRNSFGVE…CEGFIGEDQV (304 aa). ATP is bound at residue 68–75; it reads GMGGVGKT. LRR repeat units lie at residues 401–422, 423–444, 447–470, 471–493, and 494–516; these read AVRRMSLMDNHIEEITCESKCS, ELTTLFLQSNQLKNLSGEFIRY, KLVVLDLSYNRDFNKLPEQISGLV, SLQFLDLSNTSIKQLPVGLKKLK, and KLTFLNLAYTVRLCSISGISRLL.

The protein belongs to the disease resistance NB-LRR family.

The protein localises to the cell membrane. Functionally, probable disease resistance protein. In Arabidopsis thaliana (Mouse-ear cress), this protein is Probable disease resistance protein At1g61300.